Here is a 249-residue protein sequence, read N- to C-terminus: NAD(P)H-quinone oxidoreductase subunit K (249 aa).

Residues cysteine 65, cysteine 66, cysteine 130, and cysteine 161 each coordinate [4Fe-4S] cluster.

It belongs to the complex I 20 kDa subunit family. In terms of assembly, NDH-1 can be composed of about 15 different subunits; different subcomplexes with different compositions have been identified which probably have different functions. It depends on [4Fe-4S] cluster as a cofactor.

It localises to the cellular thylakoid membrane. The catalysed reaction is a plastoquinone + NADH + (n+1) H(+)(in) = a plastoquinol + NAD(+) + n H(+)(out). It carries out the reaction a plastoquinone + NADPH + (n+1) H(+)(in) = a plastoquinol + NADP(+) + n H(+)(out). Its function is as follows. NDH-1 shuttles electrons from an unknown electron donor, via FMN and iron-sulfur (Fe-S) centers, to quinones in the respiratory and/or the photosynthetic chain. The immediate electron acceptor for the enzyme in this species is believed to be plastoquinone. Couples the redox reaction to proton translocation, and thus conserves the redox energy in a proton gradient. Cyanobacterial NDH-1 also plays a role in inorganic carbon-concentration. The chain is NAD(P)H-quinone oxidoreductase subunit K from Prochlorococcus marinus (strain NATL2A).